The following is a 509-amino-acid chain: tRNA (guanine(37)-N(1))-methyltransferase (509 aa).

Residues His-289, 327–328 (DL), 355–356 (DG), and Asn-387 contribute to the S-adenosyl-L-methionine site. The tract at residues 478–509 (TRNPENHEDPPLKRQRTAEAFSDEKTQIVSNT) is disordered.

Belongs to the class I-like SAM-binding methyltransferase superfamily. TRM5/TYW2 family. Monomer.

It localises to the mitochondrion matrix. The protein resides in the nucleus. It is found in the cytoplasm. The catalysed reaction is guanosine(37) in tRNA + S-adenosyl-L-methionine = N(1)-methylguanosine(37) in tRNA + S-adenosyl-L-homocysteine + H(+). Functionally, involved in mitochondrial tRNA methylation. Specifically methylates the N1 position of guanosine-37 in various tRNAs. Methylation is not dependent on the nature of the nucleoside 5' of the target nucleoside. This is the first step in the biosynthesis of wybutosine (yW), a modified base adjacent to the anticodon of tRNAs and required for accurate decoding. The sequence is that of tRNA (guanine(37)-N(1))-methyltransferase from Homo sapiens (Human).